Consider the following 712-residue polypeptide: MTEKTIKDWEALAEKELRVSPEGLVWHTPEGIDVKPLYTSDDMSGIGHLNSLPGFEPFVRGPRATMYAGRPWTVRQYAGFSTAEASNAFYRRNLAAGQQGVSVAFDLATHRGYDSDHPRVQGDVGKAGVAIDSVEDMKILFDGIPLDRISVSMTMNGAVIPILASFIVAGEEQGVSRDKLSGTIQNDILKEFMVRNTYIYPPEPSMRIVADIIEYTAKEMPKFNSISISGYHMQEAGATLVQELAFTLADGREYVRAALAKGLNVDDFAGRLSFFFAIGMNFFMEAAKLRAARLLWTRIMQEFKPEKASSLMLRTHCQTSGVSLQEQDPYNNIVRTAFEAMSAVLGGTQSLHTNSFDEAMALPTDFSARIARNTQLILQHETGVTKVVDPLAGSYYVESLTNELAEKAWGLIEEVEALGGMTKAVNAGLPKRLIEEAATRRQAAVDRAEEVIVGVNKYRLENEQPIDILQIDNAAVRTAQVKRIEETRRRRDSQKMKQALDALADVARSGKGNLLAAAVEAARARATVGEITDAMREAFGDYTAIPEVVTDIYGKAYEGDPELGVLAGRLGEATKRLGHKPKIMVAKLGQDGHDRGAKVIASAFGDIGFDVVAGPLFQTPEEAADLALAEEVTVIGVSSLAAGHRTLMPQLAEALKKRGGEDIIVVCGGVIPRQDYDYLMENGVAAVFGPGTQVLDAARAVLDLIEGKRRNV.

Substrate-binding positions include threonine 73–tyrosine 77, threonine 183–glutamine 185, arginine 195, lysine 222, histidine 232, and arginine 271–serine 273. One can recognise a B12-binding domain in the interval lysine 580 to valine 712. An adenosylcob(III)alamin-binding site is contributed by histidine 593.

The protein belongs to the methylmalonyl-CoA mutase family. As to quaternary structure, homodimer. Requires adenosylcob(III)alamin as cofactor. It depends on a monovalent cation as a cofactor.

It catalyses the reaction (R)-methylmalonyl-CoA = succinyl-CoA. Its pathway is metabolic intermediate metabolism; propanoyl-CoA degradation; succinyl-CoA from propanoyl-CoA: step 3/3. Functionally, radical enzyme that catalyzes the transformation of methylmalonyl-CoA to succinyl-CoA. Is required for growth on the polyhydroxyalkanoate degradation pathway intermediates 3-hydroxybutyrate and acetoacetate as sole carbon source. The chain is Methylmalonyl-CoA mutase from Rhizobium meliloti (strain 1021) (Ensifer meliloti).